The sequence spans 409 residues: Glycosyltransferase GtfE (409 aa).

Belongs to the glycosyltransferase 28 family.

It participates in antibiotic biosynthesis; vancomycin biosynthesis. Its function is as follows. D-glucosyltransferase that acts on the aglycone core, transferring D-glucose to the phenolic hydroxyl of OH-Phegly(4) to form a devancoaminyl-vancomycin (DVV) intermediate in the biosynthesis of glycopeptide antibiotic vancomycin. Also able to glycosylate A47934, an antibiotic with a teicoplanin-like heptapeptide, but lacking sugar residues. The sequence is that of Glycosyltransferase GtfE (gtfE) from Amycolatopsis orientalis (Nocardia orientalis).